We begin with the raw amino-acid sequence, 447 residues long: Tubulin beta chain (447 aa).

GTP contacts are provided by glutamine 11, glutamate 69, serine 138, glycine 142, threonine 143, glycine 144, asparagine 204, and asparagine 226. Glutamate 69 contributes to the Mg(2+) binding site. Residues 421–447 are disordered; the sequence is EYQQYQDASISEGEEEYEEEAPMEPEE. A compositionally biased stretch (acidic residues) spans 432–447; it reads EGEEEYEEEAPMEPEE.

This sequence belongs to the tubulin family. Dimer of alpha and beta chains. A typical microtubule is a hollow water-filled tube with an outer diameter of 25 nm and an inner diameter of 15 nM. Alpha-beta heterodimers associate head-to-tail to form protofilaments running lengthwise along the microtubule wall with the beta-tubulin subunit facing the microtubule plus end conferring a structural polarity. Microtubules usually have 13 protofilaments but different protofilament numbers can be found in some organisms and specialized cells. Requires Mg(2+) as cofactor.

Its subcellular location is the cytoplasm. It is found in the cytoskeleton. In terms of biological role, tubulin is the major constituent of microtubules, a cylinder consisting of laterally associated linear protofilaments composed of alpha- and beta-tubulin heterodimers. Microtubules grow by the addition of GTP-tubulin dimers to the microtubule end, where a stabilizing cap forms. Below the cap, tubulin dimers are in GDP-bound state, owing to GTPase activity of alpha-tubulin. This is Tubulin beta chain from Rhynchosporium secalis (Barley scald fungus).